We begin with the raw amino-acid sequence, 166 residues long: Transcription antitermination protein NusB (166 aa).

A compositionally biased stretch (basic and acidic residues) spans 1–15 (MISDDSDRFNPRDPK). Residues 1–30 (MISDDSDRFNPRDPKPANAGKPSKSAKRRE) form a disordered region.

Belongs to the NusB family.

In terms of biological role, involved in transcription antitermination. Required for transcription of ribosomal RNA (rRNA) genes. Binds specifically to the boxA antiterminator sequence of the ribosomal RNA (rrn) operons. The protein is Transcription antitermination protein NusB of Pseudomonas fluorescens (strain ATCC BAA-477 / NRRL B-23932 / Pf-5).